The primary structure comprises 264 residues: Agamous-like MADS-box protein AGL15 (264 aa).

Positions 3 to 57 (RGKIEIKRIENANSRQVTFSKRRAGLLKKAHELSVLCDAEVAVIVFSKSGKLFEF) constitute an MADS-box domain. Positions 87-177 (NQEECTEVDL…RRQVQELRSF (91 aa)) constitute a K-box domain. The disordered stretch occupies residues 223–264 (LQLGLPGEAHDTRKNEGDRESPSSDSVTTSTTRATAQRISLV). Positions 230-244 (EAHDTRKNEGDRESP) are enriched in basic and acidic residues. Positions 245–257 (SSDSVTTSTTRAT) are enriched in low complexity.

The protein resides in the nucleus. In terms of biological role, probable transcription factor. This chain is Agamous-like MADS-box protein AGL15 (AGL15), found in Brassica napus (Rape).